Consider the following 454-residue polypeptide: Glycosyl hydrolase family 109 protein (454 aa).

Residues 1-29 (MFAMKRREFIAASAAVAASSLLPQTPAWA) constitute a signal peptide (tat-type signal). NAD(+) is bound by residues 43 to 44 (MR), aspartate 65, 116 to 119 (WEYH), 136 to 137 (EV), and asparagine 165. Residue tyrosine 194 participates in substrate binding. 224-228 (SEARW) contacts NAD(+). Substrate is bound by residues arginine 229, 241–244 (YPSH), and tyrosine 324. Residue tyrosine 241 coordinates NAD(+).

The protein belongs to the Gfo/Idh/MocA family. Glycosyl hydrolase 109 subfamily. Requires NAD(+) as cofactor. Predicted to be exported by the Tat system. The position of the signal peptide cleavage has not been experimentally proven.

Glycosidase. The polypeptide is Glycosyl hydrolase family 109 protein (Stenotrophomonas maltophilia (strain K279a)).